Consider the following 193-residue polypeptide: MAKKQSILSPIIRITFTFLVLCGLVYPLIVTGIAQAVMKDNADGSLIYNDKNEVIGSTLIGQNFTDPRYFHGRVSSIEYKAEASGSNNYAPSNPDLEKRVEKSIEEWKKQNPSVPVTEVPIDLVTNSGSGLDPDISPKAASVQVERISKLTNIPKETLDQLIKDQTEGAALGLFGETRVNVLKLNLELQKIMK.

A helical transmembrane segment spans residues 14-34 (ITFTFLVLCGLVYPLIVTGIA).

This sequence belongs to the KdpC family. In terms of assembly, the system is composed of three essential subunits: KdpA, KdpB and KdpC.

It is found in the cell membrane. Functionally, part of the high-affinity ATP-driven potassium transport (or Kdp) system, which catalyzes the hydrolysis of ATP coupled with the electrogenic transport of potassium into the cytoplasm. This subunit acts as a catalytic chaperone that increases the ATP-binding affinity of the ATP-hydrolyzing subunit KdpB by the formation of a transient KdpB/KdpC/ATP ternary complex. In Bacillus cereus (strain AH820), this protein is Potassium-transporting ATPase KdpC subunit.